The chain runs to 215 residues: Peroxiredoxin (215 aa).

A Thioredoxin domain is found at 6 to 161; that stretch reads PLIGEEFPRV…ILRAVKALQT (156 aa). Cysteine 48 acts as the Cysteine sulfenic acid (-SOH) intermediate in catalysis. Arginine 124 contributes to the substrate binding site. Cysteines 205 and 211 form a disulfide.

This sequence belongs to the peroxiredoxin family. Prx6 subfamily. As to quaternary structure, homodecamer. Pentamer of dimers that assemble into a ring structure.

It is found in the cytoplasm. It catalyses the reaction a hydroperoxide + [thioredoxin]-dithiol = an alcohol + [thioredoxin]-disulfide + H2O. Thiol-specific peroxidase that catalyzes the reduction of hydrogen peroxide and organic hydroperoxides to water and alcohols, respectively. Plays a role in cell protection against oxidative stress by detoxifying peroxides. This Thermotoga maritima (strain ATCC 43589 / DSM 3109 / JCM 10099 / NBRC 100826 / MSB8) protein is Peroxiredoxin.